The primary structure comprises 676 residues: Protein TAPT1 homolog (676 aa).

The disordered stretch occupies residues 1–44 (MNATLNSAGGKRQLRFRGDVTGSRVEELHHQQQEEQKQKAPLAQ). Residues 24–38 (RVEELHHQQQEEQKQ) show a composition bias toward basic and acidic residues. The next 6 helical transmembrane spans lie at 128–148 (SFLY…WALV), 170–190 (EICD…MLLV), 249–269 (VLTH…LIMF), 346–366 (FCVM…IDWV), 414–434 (GFIP…AVSF), and 437–457 (LAAW…RICL). Residues 625-676 (SGDGVTSAKAKKATQRLPKRTHKRSESEPGMPSMVEKGGAAGIAGGNQTTQL) are disordered. The span at 633-647 (KAKKATQRLPKRTHK) shows a compositional bias: basic residues.

It belongs to the TAPT1 family.

It is found in the membrane. This is Protein TAPT1 homolog from Drosophila melanogaster (Fruit fly).